A 685-amino-acid chain; its full sequence is Putative protein FAR1-RELATED SEQUENCE 10 (685 aa).

Residues glutamate 69 to glutamate 161 form the FAR1 domain. Positions valine 292–alanine 388 constitute an MULE domain. The SWIM-type zinc finger occupies glycine 565–asparagine 603.

This sequence belongs to the FHY3/FAR1 family.

The chain is Putative protein FAR1-RELATED SEQUENCE 10 (FRS10) from Arabidopsis thaliana (Mouse-ear cress).